A 674-amino-acid chain; its full sequence is Protein tesmin/TSO1-like CXC 2 (674 aa).

Composition is skewed to polar residues over residues 1–16 and 76–89; these read MDTP…TPIS and THNS…NSVE. 2 disordered regions span residues 1–20 and 69–113; these read MDTP…KSRF and KESR…GLNI. The segment covering 95–109 has biased composition (basic and acidic residues); the sequence is STSHEEVPAEGEDTK. In terms of domain architecture, CRC spans 373–498; the sequence is SCKRCNCKKS…RCEGCKNAFG (126 aa). 2 disordered regions span residues 504 to 529 and 623 to 655; these read SIDM…SQQN and IPNI…RRNG. The span at 507–516 shows a compositional bias: acidic residues; it reads MEAEQEEENE.

This sequence belongs to the lin-54 family. As to expression, ubiquitous but expressed mostly in all the aerial organs with highest expression in flowers.

Its subcellular location is the nucleus. Plays a role in development of both male and female reproductive tissues. The chain is Protein tesmin/TSO1-like CXC 2 (TCX2) from Arabidopsis thaliana (Mouse-ear cress).